The following is a 214-amino-acid chain: Single-pass membrane and coiled-coil domain-containing protein 1 (214 aa).

The stretch at 5–40 (TTTLISLKEAMKRVDNKLRALDTQFKELDVTKDNLT) forms a coiled coil. A helical membrane pass occupies residues 59 to 81 (IWTAALALGFTSMELNIVYSYVI). The disordered stretch occupies residues 193 to 214 (KQAQDPENSRAPLKELMPPVKD).

It localises to the membrane. The polypeptide is Single-pass membrane and coiled-coil domain-containing protein 1 (Smco1) (Mus musculus (Mouse)).